The primary structure comprises 173 residues: Zinc resistance-associated protein homolog (173 aa).

Residues 1-28 (MNSKRIALGIIALATVVSLGTAANNAFA) form the signal peptide.

Belongs to the ZraP family.

This chain is Zinc resistance-associated protein homolog, found in Nitratidesulfovibrio vulgaris (strain ATCC 29579 / DSM 644 / CCUG 34227 / NCIMB 8303 / VKM B-1760 / Hildenborough) (Desulfovibrio vulgaris).